A 98-amino-acid chain; its full sequence is UPF0251 protein VC0395_0048/VC395_A0084 (98 aa).

The protein belongs to the UPF0251 family.

This chain is UPF0251 protein VC0395_0048/VC395_A0084, found in Vibrio cholerae serotype O1 (strain ATCC 39541 / Classical Ogawa 395 / O395).